A 360-amino-acid chain; its full sequence is Ethanolamine-phosphate cytidylyltransferase (360 aa).

Residues 207-208, 215-218, Lys-243, 291-294, and 321-325 each bind CTP; these read GF, HTEA, HGDD, and HTEGL.

This sequence belongs to the cytidylyltransferase family.

It carries out the reaction phosphoethanolamine + CTP + H(+) = CDP-ethanolamine + diphosphate. The protein operates within phospholipid metabolism; phosphatidylethanolamine biosynthesis; phosphatidylethanolamine from ethanolamine: step 2/3. Ethanolamine-phosphate cytidylyltransferase that catalyzes the second step in the synthesis of phosphatidylethanolamine (PE) from ethanolamine via the CDP-ethanolamine pathway. The protein is Ethanolamine-phosphate cytidylyltransferase (pctA) of Dictyostelium discoideum (Social amoeba).